The chain runs to 161 residues: MPSFDVVCEANMVEVKNAVEQANKEISTRFDFKGSDARVEQKEGELTAFADDDFKLDQVKDVLINKMAKRNVDVRFLDYGKVEKISGDKVKQVITIKKGVTGDLAKKIVRMIKDSKIKVQGSIQGDAVRVSGTKRDDLQAVIAMLRKDANEAPLDFNNFRD.

The protein belongs to the YajQ family.

Functionally, nucleotide-binding protein. In Cupriavidus metallidurans (strain ATCC 43123 / DSM 2839 / NBRC 102507 / CH34) (Ralstonia metallidurans), this protein is Nucleotide-binding protein Rmet_2899.